The sequence spans 586 residues: Lamin-B1 (586 aa).

A disordered region spans residues 1–31 (MATATPVPPRMGSRAGGPTTPLSPTRLSRLQ). Alanine 2 bears the N-acetylalanine mark. The head stretch occupies residues 2-34 (ATATPVPPRMGSRAGGPTTPLSPTRLSRLQEKE). 2 positions are modified to phosphothreonine: threonine 3 and threonine 5. Residue arginine 14 is modified to Omega-N-methylarginine. Position 20 is a phosphothreonine (threonine 20). Serine 23 is subject to Phosphoserine. The residue at position 25 (threonine 25) is a Phosphothreonine. At serine 28 the chain carries Phosphoserine. The IF rod domain occupies 32-388 (EKEELRELND…KLLEGEEERL (357 aa)). The coil 1A stretch occupies residues 35–69 (ELRELNDRLAVYIDKVRSLETENSALQLQVTEREE). The linker 1 stretch occupies residues 70–81 (VRGRELTGLKAL). A coil 1B region spans residues 82–215 (YETELADARR…EFRKSMYEEE (134 aa)). Lysine 102 is covalently cross-linked (Glycyl lysine isopeptide (Lys-Gly) (interchain with G-Cter in SUMO2)). Lysine 111 carries the N6-acetyllysine modification. A Glycyl lysine isopeptide (Lys-Gly) (interchain with G-Cter in SUMO2) cross-link involves residue lysine 123. Serine 126 is subject to Phosphoserine. Residue lysine 145 forms a Glycyl lysine isopeptide (Lys-Gly) (interchain with G-Cter in SUMO2) linkage. Lysine 157 carries the post-translational modification N6-acetyllysine; alternate. Lysine 157 participates in a covalent cross-link: Glycyl lysine isopeptide (Lys-Gly) (interchain with G-Cter in SUMO2); alternate. Serine 158 carries the post-translational modification Phosphoserine. A Glycyl lysine isopeptide (Lys-Gly) (interchain with G-Cter in SUMO2) cross-link involves residue lysine 181. Phosphoserine is present on residues serine 200, serine 210, and serine 232. The tract at residues 216–243 (INETRRKHETRLVEVDSGRQIEYEYKLA) is linker 2. Glycyl lysine isopeptide (Lys-Gly) (interchain with G-Cter in SUMO2) cross-links involve residues lysine 241 and lysine 261. A coil 2 region spans residues 244-386 (QALHEMREQH…YRKLLEGEEE (143 aa)). An N6-acetyllysine; alternate modification is found at lysine 271. Lysine 271 participates in a covalent cross-link: Glycyl lysine isopeptide (Lys-Gly) (interchain with G-Cter in SUMO2); alternate. 2 positions are modified to phosphoserine: serine 278 and serine 302. Residue lysine 312 forms a Glycyl lysine isopeptide (Lys-Gly) (interchain with G-Cter in SUMO2) linkage. Lysine 330 bears the N6-acetyllysine; alternate mark. Lysine 330 participates in a covalent cross-link: Glycyl lysine isopeptide (Lys-Gly) (interchain with G-Cter in SUMO2); alternate. A phosphoserine mark is found at serine 375 and serine 393. Residues 387–586 (RLKLSPSPSS…RASNRSCAIM (200 aa)) are tail. The disordered stretch occupies residues 388 to 432 (LKLSPSPSSRVTVSRASSSRSVRTTRGKRKRVDVEESEASSSVSI). Positions 390–409 (LSPSPSSRVTVSRASSSRSV) are enriched in low complexity. O-linked (GlcNAc) threonine glycosylation occurs at threonine 399. Arginine 413 is subject to Omega-N-methylarginine. Positions 415 to 420 (KRKRVD) match the Nuclear localization signal motif. An LTD domain is found at 430–546 (VSISHSASAT…EEVAQRSTVF (117 aa)). Lysine 483 is modified (N6-acetyllysine). A Glycyl lysine isopeptide (Lys-Gly) (interchain with G-Cter in SUMO2) cross-link involves residue lysine 532. Phosphoserine is present on serine 534. A Glycyl lysine isopeptide (Lys-Gly) (interchain with G-Cter in SUMO2) cross-link involves residue lysine 547. Residue threonine 575 is modified to Phosphothreonine. Cysteine 583 carries the cysteine methyl ester modification. Cysteine 583 carries S-farnesyl cysteine lipidation. A propeptide spans 584 to 586 (AIM) (removed in mature form).

Belongs to the intermediate filament family. As to quaternary structure, homodimer. Lamin dimers then assemble into dimeric head-to-tail polymers. Ultimately, two head-to-tail polymers assemble laterally into a protofilament with a uniformly shaped rod of 3.5 nm in diameter. Interacts with SPAG4 and SEPT12. B-type lamins undergo a series of modifications, such as farnesylation and phosphorylation. Increased phosphorylation of the lamins occurs before envelope disintegration and probably plays a role in regulating lamin associations. In terms of processing, phosphorylation plays a key role in lamin organization, subcellular localization and nuclear envelope disintegration. Phosphorylation by CDK1 at Ser-23 and Ser-393 at the onset of mitosis drives lamin disassembly and nuclear envelope breakdown.

It is found in the nucleus lamina. Its function is as follows. Lamins are intermediate filament proteins that assemble into a filamentous meshwork, and which constitute the major components of the nuclear lamina, a fibrous layer on the nucleoplasmic side of the inner nuclear membrane. Lamins provide a framework for the nuclear envelope, bridging the nuclear envelope and chromatin, thereby playing an important role in nuclear assembly, chromatin organization, nuclear membrane and telomere dynamics. The structural integrity of the lamina is strictly controlled by the cell cycle, as seen by the disintegration and formation of the nuclear envelope in prophase and telophase, respectively. The protein is Lamin-B1 (LMNB1) of Homo sapiens (Human).